Reading from the N-terminus, the 428-residue chain is Histidinol dehydrogenase (428 aa).

3 residues coordinate substrate: S234, Q256, and H259. Positions 256 and 259 each coordinate Zn(2+). Residues E323 and H324 each act as proton acceptor in the active site. 4 residues coordinate substrate: H324, D357, E411, and H416. D357 contributes to the Zn(2+) binding site. Residue H416 coordinates Zn(2+).

Belongs to the histidinol dehydrogenase family. It depends on Zn(2+) as a cofactor.

It carries out the reaction L-histidinol + 2 NAD(+) + H2O = L-histidine + 2 NADH + 3 H(+). Its pathway is amino-acid biosynthesis; L-histidine biosynthesis; L-histidine from 5-phospho-alpha-D-ribose 1-diphosphate: step 9/9. Catalyzes the sequential NAD-dependent oxidations of L-histidinol to L-histidinaldehyde and then to L-histidine. This Campylobacter jejuni (strain RM1221) protein is Histidinol dehydrogenase.